Consider the following 589-residue polypeptide: MFVPRSLKLKRNSNDDLKSCEAKKSKPEAAGLQLEGNRETLVLESVTKEAVTADRPGSASSTSSPSCQLAEVCSTGPDQGVKDSHPSEEPVKSFSKTQRWPEPGEPVCVVCGRYGEYICDKTDEDVCSLECKAKHLLQVKEEEGSLKPSSPQGAASEPESPLDAFYVYKEHPFIVALRDDQIETLKQQLGISVQGQEVARPIIDFEHCGFPETLNQNLKKSGYEVPTPIQMQMIPVGLLGRDILASADTGSGKTAAFLLPVIIRALPEDKTPSALILTPTRELAIQIERQAKELMRGLPRMKTVLLVGGLPLPPQLYRLQQHVKADTMLKMGFQQQVLDVLEHTPSDCQTVLVSATIPDSIDQLADQLLHNPVRIVTGDKNLPCSSVRQIILWVEDPAKKKKLFEILNDQKLFKPPVLVFVDCKLGADLLSEAVQKITGLSSTSIHSEKSQVERREILKGLLEGDYEVVVSTGILGRGLDLVNVKLVVNFDMPSSLDEYVHQVGRVGRLGQNGTAITFINNNSKRLFWDVAKRVKPTGSILPPQLLNSPYLHEQKRKEQQKDRQTQSSLVTGANLMDIIRKHEKSSSQK.

Disordered stretches follow at residues 1 to 36 (MFVP…QLEG) and 48 to 98 (KEAV…SKTQ). A compositionally biased stretch (basic and acidic residues) spans 12 to 27 (NSNDDLKSCEAKKSKP). Lysine 26 is covalently cross-linked (Glycyl lysine isopeptide (Lys-Gly) (interchain with G-Cter in SUMO2)). A Phosphoserine modification is found at serine 64. Residues 80-91 (GVKDSHPSEEPV) show a composition bias toward basic and acidic residues. The HIT-type zinc-finger motif lies at 104 to 133 (GEPVCVVCGRYGEYICDKTDEDVCSLECKA). Phosphoserine is present on residues serine 156 and serine 160. The Q motif signature appears at 203–231 (IDFEHCGFPETLNQNLKKSGYEVPTPIQM). The 142-residue stretch at 234-375 (IPVGLLGRDI…DQLLHNPVRI (142 aa)) folds into the Helicase ATP-binding domain. 247-254 (ADTGSGKT) is an ATP binding site. The short motif at 323-326 (VKAD) is the DEAD box element. Residues 399–549 (KKKKLFEILN…ILPPQLLNSP (151 aa)) form the Helicase C-terminal domain.

Belongs to the DEAD box helicase family. DDX59 subfamily. In terms of assembly, interacts (via HIT-type zinc finger) with the RUVBL1/RUVBL2 complex in the presence of ADP.

It is found in the cytoplasm. The protein localises to the nucleus. It carries out the reaction ATP + H2O = ADP + phosphate + H(+). The protein is Probable ATP-dependent RNA helicase DDX59 (Ddx59) of Rattus norvegicus (Rat).